Consider the following 205-residue polypeptide: Macrophage immunometabolism regulator (205 aa).

The interval 1–40 is disordered; that stretch reads MEVDINGVNRTNNSVPSTAEGSSPSKPDPEKPRCSSTPCS. Over residues 8 to 25 the composition is skewed to polar residues; it reads VNRTNNSVPSTAEGSSPS.

Belongs to the UNC119-binding protein family. Interacts with unc119 family proteins; interaction preferentially takes place when unc119 proteins are unliganded with myristoylated proteins.

The protein resides in the cytoplasm. It is found in the cell projection. It localises to the cilium. In terms of biological role, may play a role in immune regulation through regulation of the macrophage function. May also play a role in trafficking of proteins via its interaction with unc119 family cargo adapters. May play a role in ciliary membrane localization. In Xenopus laevis (African clawed frog), this protein is Macrophage immunometabolism regulator (macir).